Here is a 300-residue protein sequence, read N- to C-terminus: Acetyl-coenzyme A carboxylase carboxyl transferase subunit beta (300 aa).

Residues 24 to 293 (LWTNCESCSQ…NAPGAALGGA (270 aa)) form the CoA carboxyltransferase N-terminal domain. C28, C31, C47, and C50 together coordinate Zn(2+). The C4-type zinc-finger motif lies at 28–50 (CESCSQMILVKDLQKAMNVCPHC).

Belongs to the AccD/PCCB family. In terms of assembly, acetyl-CoA carboxylase is a heterohexamer composed of biotin carboxyl carrier protein (AccB), biotin carboxylase (AccC) and two subunits each of ACCase subunit alpha (AccA) and ACCase subunit beta (AccD). Zn(2+) serves as cofactor.

It is found in the cytoplasm. The catalysed reaction is N(6)-carboxybiotinyl-L-lysyl-[protein] + acetyl-CoA = N(6)-biotinyl-L-lysyl-[protein] + malonyl-CoA. It participates in lipid metabolism; malonyl-CoA biosynthesis; malonyl-CoA from acetyl-CoA: step 1/1. Its function is as follows. Component of the acetyl coenzyme A carboxylase (ACC) complex. Biotin carboxylase (BC) catalyzes the carboxylation of biotin on its carrier protein (BCCP) and then the CO(2) group is transferred by the transcarboxylase to acetyl-CoA to form malonyl-CoA. The protein is Acetyl-coenzyme A carboxylase carboxyl transferase subunit beta of Gluconacetobacter diazotrophicus (strain ATCC 49037 / DSM 5601 / CCUG 37298 / CIP 103539 / LMG 7603 / PAl5).